The chain runs to 1342 residues: DNA-directed RNA polymerase subunit beta (1342 aa).

This sequence belongs to the RNA polymerase beta chain family. As to quaternary structure, the RNAP catalytic core consists of 2 alpha, 1 beta, 1 beta' and 1 omega subunit. When a sigma factor is associated with the core the holoenzyme is formed, which can initiate transcription.

The enzyme catalyses RNA(n) + a ribonucleoside 5'-triphosphate = RNA(n+1) + diphosphate. DNA-dependent RNA polymerase catalyzes the transcription of DNA into RNA using the four ribonucleoside triphosphates as substrates. The sequence is that of DNA-directed RNA polymerase subunit beta from Buchnera aphidicola subsp. Acyrthosiphon pisum (strain Tuc7).